Reading from the N-terminus, the 159-residue chain is Large ribosomal subunit protein uL15 (159 aa).

Over residues 1–13 (MRIHEVTPKEGST) the composition is skewed to basic and acidic residues. The interval 1-51 (MRIHEVTPKEGSTKRRRRVGRGISAGQGASCGFGMRGQKSRSGTGTKAGFE) is disordered. Residues 23-35 (ISAGQGASCGFGM) are compositionally biased toward gly residues.

It belongs to the universal ribosomal protein uL15 family. In terms of assembly, part of the 50S ribosomal subunit.

Binds to the 23S rRNA. The protein is Large ribosomal subunit protein uL15 of Rippkaea orientalis (strain PCC 8801 / RF-1) (Cyanothece sp. (strain PCC 8801)).